The following is a 725-amino-acid chain: ABC transporter G family member 7 (725 aa).

Residues 12–34 form a helical membrane-spanning segment; that stretch reads VVSGIGGNGVGGALAAVAAALLV. Residues 70 to 316 form the ABC transporter domain; sequence IRWRNITCSL…YFGNFGFLCP (247 aa). 108-115 is a binding site for ATP; the sequence is GPSGSGKT. Residues 392 to 603 enclose the ABC transmembrane type-2 domain; sequence RQFFLLLKRA…AFQGLCINEF (212 aa). Helical transmembrane passes span 446 to 466, 493 to 513, 528 to 548, and 553 to 573; these read LLQV…VGVF, IAEI…LYPM, GIVT…GAMV, and AAMA…GYYV. Residues 676 to 725 are disordered; the sequence is NSGVQLDKAEVDQTEKPEDDDINQPLDDQNQTSDSDDELDEIRPFVLEGL. Over residues 682–691 the composition is skewed to basic and acidic residues; that stretch reads DKAEVDQTEK.

Belongs to the ABC transporter superfamily. ABCG family. Eye pigment precursor importer (TC 3.A.1.204) subfamily.

It localises to the membrane. In Arabidopsis thaliana (Mouse-ear cress), this protein is ABC transporter G family member 7 (ABCG7).